We begin with the raw amino-acid sequence, 333 residues long: L-lactate dehydrogenase B chain (333 aa).

NAD(+) is bound by residues 29–57 and arginine 99; that span reads GQVGMACAISILGKGLCDELALVDVLEDK. Substrate is bound by residues arginine 106, asparagine 138, and arginine 169. Residue asparagine 138 coordinates NAD(+). The Proton acceptor role is filled by histidine 193. Threonine 248 is a binding site for substrate.

Belongs to the LDH/MDH superfamily. LDH family. As to quaternary structure, homotetramer.

It localises to the cytoplasm. It carries out the reaction (S)-lactate + NAD(+) = pyruvate + NADH + H(+). Its pathway is fermentation; pyruvate fermentation to lactate; (S)-lactate from pyruvate: step 1/1. In terms of biological role, interconverts simultaneously and stereospecifically pyruvate and lactate with concomitant interconversion of NADH and NAD(+). The chain is L-lactate dehydrogenase B chain (LDHB) from Gallus gallus (Chicken).